Here is a 245-residue protein sequence, read N- to C-terminus: Ninjurin-A (245 aa).

At 1–170 (MSNLEHITLE…TSSQHPYFYP (170 aa)) the chain is on the extracellular side. Asn19 and Asn28 each carry an N-linked (GlcNAc...) asparagine glycan. The segment at 32 to 101 (HSYGGAIDGR…NVNVNVPNGG (70 aa)) is disordered. A compositionally biased stretch (low complexity) spans 92–101 (NVNVNVPNGG). The segment at 135–146 (KKTLAQGMMDLA) is helix alpha1. The interval 149–165 (SANANQLRYVLETSSQH) is helix alpha2. A helical transmembrane segment spans residues 171–191 (SLLFISLSIIFQIAVGVGLIL). At 192-211 (NGQYNIKNGHDICRANRINN) the chain is on the cytoplasmic side. Residues 212 to 232 (YTVSGIFIVTVVNVLISAFTV) form a helical membrane-spanning segment. Residues 233–245 (DRDTVPALPANTT) are Extracellular-facing.

Belongs to the ninjurin family. As to quaternary structure, homooligomer. Cleaved by Mmp1 protease to generate the Secreted ninjurin-A form.

The protein resides in the cell membrane. It is found in the secreted. Its function is as follows. Effector of non-apoptotic necrotic cell death that mediates plasma membrane rupture (cytolysis): oligomerizes in response to death stimuli and promotes plasma membrane rupture by introducing hydrophilic faces of 2 alpha helices into the hydrophobic membrane, leading to release intracellular molecules that propagate the inflammatory response. Also acts as a homophilic transmembrane adhesion molecule that promotes cell adhesion by mediating homophilic interactions via its extracellular region. Functionally, secreted form generated by cleavage, which acts as a negative regulator of cell adhesion. Promotes the loss of cell adhesion in a cell non-autonomous manner. The protein is Ninjurin-A of Drosophila melanogaster (Fruit fly).